A 497-amino-acid chain; its full sequence is Actin-binding protein WASF2 (497 aa).

Disordered stretches follow at residues 173-203 (KEKR…KEEW) and 239-436 (ENVD…SDAR). The span at 252–263 (SDSASSPSPSFS) shows a compositional bias: low complexity. Pro residues-rich tracts occupy residues 298–335 (SHPP…PPLP) and 343–403 (GTPP…PPLP). Positions 435–452 (ARSDLLSAIRQGFQLRRV) constitute a WH2 domain. Residue S473 is modified to Phosphoserine.

This sequence belongs to the SCAR/WAVE family. As to quaternary structure, binds actin and the Arp2/3 complex. Interacts with BAIAP2. Component of the WAVE2 complex composed of ABI1, CYFIP1/SRA1, NCKAP1/NAP1 (NCKAP1l/HEM1 in hematopoietic cells) and WASF2/WAVE2. Directly interacts with BRK1. Interacts with human cytomegalovirus protein UL135. Interacts with FNBP1L (via the SH3 domain).

It localises to the cytoplasm. It is found in the cytoskeleton. The protein resides in the cell projection. The protein localises to the lamellipodium. Its subcellular location is the basolateral cell membrane. In terms of biological role, downstream effector molecule involved in the transmission of signals from tyrosine kinase receptors and small GTPases to the actin cytoskeleton. Promotes formation of actin filaments. Part of the WAVE complex that regulates lamellipodia formation. The WAVE complex regulates actin filament reorganization via its interaction with the Arp2/3 complex. The chain is Actin-binding protein WASF2 from Mus musculus (Mouse).